Reading from the N-terminus, the 423-residue chain is Gamma-glutamyl phosphate reductase (423 aa).

It belongs to the gamma-glutamyl phosphate reductase family.

Its subcellular location is the cytoplasm. It catalyses the reaction L-glutamate 5-semialdehyde + phosphate + NADP(+) = L-glutamyl 5-phosphate + NADPH + H(+). Its pathway is amino-acid biosynthesis; L-proline biosynthesis; L-glutamate 5-semialdehyde from L-glutamate: step 2/2. Its function is as follows. Catalyzes the NADPH-dependent reduction of L-glutamate 5-phosphate into L-glutamate 5-semialdehyde and phosphate. The product spontaneously undergoes cyclization to form 1-pyrroline-5-carboxylate. The polypeptide is Gamma-glutamyl phosphate reductase (Brucella suis (strain ATCC 23445 / NCTC 10510)).